Consider the following 495-residue polypeptide: Protein YhjJ (495 aa).

The N-terminal stretch at 1–24 (MQGTKIRLLAGSLLMLASAGYVQA) is a signal peptide.

It belongs to the peptidase M16 family.

Its subcellular location is the periplasm. The sequence is that of Protein YhjJ (yhjJ) from Salmonella typhimurium (strain LT2 / SGSC1412 / ATCC 700720).